Consider the following 299-residue polypeptide: Tyrosine recombinase XerC (299 aa).

In terms of domain architecture, Core-binding (CB) spans Pro3–Leu87. One can recognise a Tyr recombinase domain in the interval Pro108 to Asp287. Active-site residues include Arg147, Lys171, His239, Arg242, and His265. Residue Tyr274 is the O-(3'-phospho-DNA)-tyrosine intermediate of the active site.

Belongs to the 'phage' integrase family. XerC subfamily. As to quaternary structure, forms a cyclic heterotetrameric complex composed of two molecules of XerC and two molecules of XerD.

It localises to the cytoplasm. In terms of biological role, site-specific tyrosine recombinase, which acts by catalyzing the cutting and rejoining of the recombining DNA molecules. The XerC-XerD complex is essential to convert dimers of the bacterial chromosome into monomers to permit their segregation at cell division. It also contributes to the segregational stability of plasmids. This is Tyrosine recombinase XerC from Shewanella sp. (strain ANA-3).